Reading from the N-terminus, the 197-residue chain is Holliday junction branch migration complex subunit RuvA (197 aa).

A domain I region spans residues 1-63; that stretch reads MYAYLKGIIT…EDAHLLYGFR (63 aa). Positions 64–142 are domain II; the sequence is SEDEKKLFLS…VAGDDLPAKI (79 aa). The tract at residues 143 to 147 is flexible linker; that stretch reads AVQAS. The segment at 148–197 is domain III; the sequence is AENQELEEAMEAMLALGYKATELKKIKKFFEGTTDTAENYIKSALKMLVK.

Belongs to the RuvA family. As to quaternary structure, homotetramer. Forms an RuvA(8)-RuvB(12)-Holliday junction (HJ) complex. HJ DNA is sandwiched between 2 RuvA tetramers; dsDNA enters through RuvA and exits via RuvB. An RuvB hexamer assembles on each DNA strand where it exits the tetramer. Each RuvB hexamer is contacted by two RuvA subunits (via domain III) on 2 adjacent RuvB subunits; this complex drives branch migration. In the full resolvosome a probable DNA-RuvA(4)-RuvB(12)-RuvC(2) complex forms which resolves the HJ.

The protein resides in the cytoplasm. The RuvA-RuvB-RuvC complex processes Holliday junction (HJ) DNA during genetic recombination and DNA repair, while the RuvA-RuvB complex plays an important role in the rescue of blocked DNA replication forks via replication fork reversal (RFR). RuvA specifically binds to HJ cruciform DNA, conferring on it an open structure. The RuvB hexamer acts as an ATP-dependent pump, pulling dsDNA into and through the RuvAB complex. HJ branch migration allows RuvC to scan DNA until it finds its consensus sequence, where it cleaves and resolves the cruciform DNA. This chain is Holliday junction branch migration complex subunit RuvA, found in Streptococcus pneumoniae (strain Taiwan19F-14).